The primary structure comprises 535 residues: SIR4-interacting protein SIF2 (535 aa).

A LisH domain is found at 4–36 (TSEELNYLIWRYCQEMGHEVSALALQDETRVLE). Positions 104–140 (EGRFTLETNSESNKAGEDGASTVERETQEDDTNSIDS) are disordered. Positions 130–140 (TQEDDTNSIDS) are enriched in acidic residues. Residue S137 is modified to Phosphoserine. WD repeat units follow at residues 155-186 (VKLD…RLAR), 218-248 (KTTN…RLWN), 259-289 (FHRA…ILWN), 316-345 (GDGS…FVYQ), 357-387 (GHHG…RIWH), 399-428 (GHSQ…RLWS), 440-470 (VDGV…NVYD), and 503-534 (SQDN…SVVA).

Homotetramer. Interacts with SIR4 N-terminal domain. Interacts with a complex composed of SIN3 and RPD3. Identified in the Set3C complex with HOS2, HST1, SNT1, CPR1, HOS4/YIL112W and SET3.

It localises to the nucleus. In terms of biological role, antagonizes telomeric silencing in yeast. May recruit SIR4 to non-telomeric sites or repression. This chain is SIR4-interacting protein SIF2 (SIF2), found in Saccharomyces cerevisiae (strain ATCC 204508 / S288c) (Baker's yeast).